Here is a 494-residue protein sequence, read N- to C-terminus: Casein kinase I homolog HRR25 (494 aa).

Residues 9-278 (FRIGRKIGSG…LARLFKDLSI (270 aa)) form the Protein kinase domain. ATP-binding positions include 15-23 (IGSGSFGDI) and lysine 38. Aspartate 128 serves as the catalytic Proton acceptor. Serine 143 carries the post-translational modification Phosphoserine. The disordered stretch occupies residues 394–494 (RQQQPQQQVQ…DKPAGQSIWL (101 aa)). Low complexity-rich tracts occupy residues 395-418 (QQQP…QQQP) and 432-444 (QQQQ…QQQQ). Over residues 445 to 479 (VPMATTRATQYPPQINSNNFNTNQASVPPQMRSNP) the composition is skewed to polar residues.

Belongs to the protein kinase superfamily. CK1 Ser/Thr protein kinase family. Casein kinase I subfamily. As to quaternary structure, interacts with HRI1. Interacts with ELP1/IKI3; the interaction leads to ELP1/IKI3 phosphorylation.

The protein localises to the cytoplasm. It localises to the nucleus. It is found in the nucleolus. The protein resides in the nucleoplasm. The enzyme catalyses L-seryl-[protein] + ATP = O-phospho-L-seryl-[protein] + ADP + H(+). It catalyses the reaction L-threonyl-[protein] + ATP = O-phospho-L-threonyl-[protein] + ADP + H(+). In terms of biological role, protein kinase which phosphorylates serine and threonine residues. Can use casein as a substrate. Phosphorylates elongator complex member ELP1/IKI3 on 'Ser-1198' and 'Ser-1202' which promotes the tRNA modification function of the complex. Associated with repair of damaged DNA and meiosis. The protein is Casein kinase I homolog HRR25 (HRR25) of Saccharomyces cerevisiae (strain ATCC 204508 / S288c) (Baker's yeast).